A 208-amino-acid polypeptide reads, in one-letter code: Methyl-CpG-binding domain protein 3-like 5 (208 aa).

Belongs to the MBD3L family.

This chain is Methyl-CpG-binding domain protein 3-like 5 (MBD3L5), found in Homo sapiens (Human).